The primary structure comprises 59 residues: U-myrmeciitoxin(01)-Mg5b (59 aa).

The first 21 residues, 1–21 (MRLSYLSLALAIIFVLTIMHA), serve as a signal peptide directing secretion. Positions 22-38 (SNVEAKASADPEPDAVG) are excised as a propeptide.

Expressed by the venom gland.

Its subcellular location is the secreted. Functionally, may have antimicrobial properties, like most ant linear peptides. This is U-myrmeciitoxin(01)-Mg5b from Myrmecia gulosa (Red bulldog ant).